The sequence spans 434 residues: F-box/kelch-repeat protein At1g55270 (434 aa).

Residues 76–122 (PPLLPGLPDDLAVACLIRVPRAEHRKLRLVCKRWYRLASGNFFYSQR) form the F-box domain. Kelch repeat units lie at residues 129-178 (EEWV…VLSG), 180-227 (HLYL…VINN), 229-276 (LYVA…VYDK), 278-321 (WFLK…SLNG), and 325-371 (GLDC…LHNK).

The polypeptide is F-box/kelch-repeat protein At1g55270 (Arabidopsis thaliana (Mouse-ear cress)).